An 892-amino-acid chain; its full sequence is Alanine--tRNA ligase (892 aa).

Positions 596, 600, 700, and 704 each coordinate Zn(2+).

The protein belongs to the class-II aminoacyl-tRNA synthetase family. Zn(2+) serves as cofactor.

The protein resides in the cytoplasm. It catalyses the reaction tRNA(Ala) + L-alanine + ATP = L-alanyl-tRNA(Ala) + AMP + diphosphate. Catalyzes the attachment of alanine to tRNA(Ala) in a two-step reaction: alanine is first activated by ATP to form Ala-AMP and then transferred to the acceptor end of tRNA(Ala). Also edits incorrectly charged Ser-tRNA(Ala) and Gly-tRNA(Ala) via its editing domain. The chain is Alanine--tRNA ligase from Methanococcus maripaludis (strain C7 / ATCC BAA-1331).